Reading from the N-terminus, the 354-residue chain is MQLSSSFPISPPKIFPSTKHHKPPVITHQLAAQIQSNRRHFVSPVKVSGYFSSISRAIEEEEEYRKARAAVNRKGVELESYAIEGISVGGHETCVIVPELKCVFDIGRCPSRAIQQKFLFITHAHLDHIGGLPMYVASRGLYNLEPPKIFVPPSIKEDVEKLLEIHRTMGQVELNVELIPLAVGETYELRNDIVVRPFATHHVIPSQGYVIYSVRKKLQKQYAHLKGKQIEKIKKSGVEITDTILSPEIAFTGDTTSEYMLDPRNADALRAKVLITEATFLDESFSTEHAQALGHTHISQIIENAKWIRSKTVLLTHFSSRYHVEEIREAVLKLQSKVSAKVIPLTEGFRSRYS.

The segment at 1–21 (MQLSSSFPISPPKIFPSTKHH) is disordered. A chloroplast-targeting transit peptide spans 1-68 (MQLSSSFPIS…EEEEEYRKAR (68 aa)).

Belongs to the RNase Z family. As to quaternary structure, homodimer. Zn(2+) is required as a cofactor. Requires Ca(2+) as cofactor. It depends on Mn(2+) as a cofactor. Mg(2+) serves as cofactor. As to expression, highly expressed in green and actively dividing tissues.

The protein localises to the plastid. It localises to the chloroplast. It carries out the reaction Endonucleolytic cleavage of RNA, removing extra 3' nucleotides from tRNA precursor, generating 3' termini of tRNAs. A 3'-hydroxy group is left at the tRNA terminus and a 5'-phosphoryl group is left at the trailer molecule.. In terms of biological role, zinc phosphodiesterase, which displays tRNA 3'-processing endonuclease activity. Involved in tRNA maturation, by removing a 3'-trailer from precursor tRNA. This is tRNase Z TRZ2, chloroplastic from Arabidopsis thaliana (Mouse-ear cress).